We begin with the raw amino-acid sequence, 265 residues long: Small ribosomal subunit protein uS3 (265 aa).

One can recognise a KH type-2 domain in the interval 43 to 111 (IRTMLKTSLD…QIQLNILEVK (69 aa)). Positions 217 to 265 (AREQANQKSSRPERRNDRSDGRTGDRRTNAPRTAPAAEAAPVAAAGVEA) are disordered. The segment covering 226–244 (SRPERRNDRSDGRTGDRRT) has biased composition (basic and acidic residues). Over residues 250–265 (APAAEAAPVAAAGVEA) the composition is skewed to low complexity.

It belongs to the universal ribosomal protein uS3 family. As to quaternary structure, part of the 30S ribosomal subunit. Forms a tight complex with proteins S10 and S14.

Binds the lower part of the 30S subunit head. Binds mRNA in the 70S ribosome, positioning it for translation. This Clavibacter michiganensis subsp. michiganensis (strain NCPPB 382) protein is Small ribosomal subunit protein uS3.